A 521-amino-acid polypeptide reads, in one-letter code: Probable cytosol aminopeptidase (521 aa).

The Mn(2+) site is built by Lys-268 and Asp-273. The active site involves Lys-280. 3 residues coordinate Mn(2+): Asp-291, Asp-350, and Glu-352. The active site involves Arg-354.

This sequence belongs to the peptidase M17 family. Mn(2+) serves as cofactor.

It localises to the cytoplasm. The catalysed reaction is Release of an N-terminal amino acid, Xaa-|-Yaa-, in which Xaa is preferably Leu, but may be other amino acids including Pro although not Arg or Lys, and Yaa may be Pro. Amino acid amides and methyl esters are also readily hydrolyzed, but rates on arylamides are exceedingly low.. The enzyme catalyses Release of an N-terminal amino acid, preferentially leucine, but not glutamic or aspartic acids.. Its function is as follows. Presumably involved in the processing and regular turnover of intracellular proteins. Catalyzes the removal of unsubstituted N-terminal amino acids from various peptides. The protein is Probable cytosol aminopeptidase of Chromobacterium violaceum (strain ATCC 12472 / DSM 30191 / JCM 1249 / CCUG 213 / NBRC 12614 / NCIMB 9131 / NCTC 9757 / MK).